A 23-amino-acid polypeptide reads, in one-letter code: Apolipophorin-1 (23 aa).

Positions 1–15 (SVKSEVDNFDKHLKA) are enriched in basic and acidic residues. Residues 1-23 (SVKSEVDNFDKHLKAESAPFNNE) form a disordered region.

As to expression, expressed in hemolymph.

It is found in the secreted. Functionally, constitutes the major component of lipophorin, which mediates transport for various types of lipids in hemolymph. Acts by forming lipoprotein particles that bind lipoproteins and lipids. This is Apolipophorin-1 from Galleria mellonella (Greater wax moth).